A 223-amino-acid polypeptide reads, in one-letter code: Translation initiation factor 6 (223 aa).

It belongs to the eIF-6 family.

In terms of biological role, binds to the 50S ribosomal subunit and prevents its association with the 30S ribosomal subunit to form the 70S initiation complex. In Methanobrevibacter smithii (strain ATCC 35061 / DSM 861 / OCM 144 / PS), this protein is Translation initiation factor 6.